We begin with the raw amino-acid sequence, 134 residues long: DNA-binding protein inhibitor ID-2 (134 aa).

S14 and S25 each carry phosphoserine. In terms of domain architecture, bHLH spans 23–75 (SRSKTPVDDPMSLLYNMNDCYSKLKELVPSIPQNKKVSKMEILQHVIDYILDL). The Nuclear export signal motif lies at 106-115 (LNTDISILSL).

In terms of assembly, interacts with GATA4 and NKX2-5. Interacts with NR0B2. Interacts with CLOCK and BMAL1. Interacts with IFI204. Interacts with NEDD9/HEF1. Interacts with ASB4; this interaction promotes ID2 proteasomal degradation. Post-translationally, ubiquitinated in a ASB4-depedent manner, leading to proteasomal degradation. In terms of processing, phosphorylated in vitro by CDK1, PKA and PKC. Highly expressed in early fetal tissues, including those of the central nervous system.

The protein localises to the cytoplasm. The protein resides in the nucleus. In terms of biological role, transcriptional regulator (lacking a basic DNA binding domain) which negatively regulates the basic helix-loop-helix (bHLH) transcription factors by forming heterodimers and inhibiting their DNA binding and transcriptional activity. Implicated in regulating a variety of cellular processes, including cellular growth, senescence, differentiation, apoptosis, angiogenesis, and neoplastic transformation. Inhibits skeletal muscle and cardiac myocyte differentiation. Regulates the circadian clock by repressing the transcriptional activator activity of the CLOCK-BMAL1 heterodimer. Restricts the CLOCK and BMAL1 localization to the cytoplasm. Plays a role in both the input and output pathways of the circadian clock: in the input component, is involved in modulating the magnitude of photic entrainment and in the output component, contributes to the regulation of a variety of liver clock-controlled genes involved in lipid metabolism. This is DNA-binding protein inhibitor ID-2 (ID2) from Homo sapiens (Human).